The following is a 116-amino-acid chain: Large ribosomal subunit protein bL19 (116 aa).

It belongs to the bacterial ribosomal protein bL19 family.

In terms of biological role, this protein is located at the 30S-50S ribosomal subunit interface and may play a role in the structure and function of the aminoacyl-tRNA binding site. The polypeptide is Large ribosomal subunit protein bL19 (Clostridioides difficile (strain 630) (Peptoclostridium difficile)).